Here is a 204-residue protein sequence, read N- to C-terminus: Large ribosomal subunit protein uL3 (204 aa).

It belongs to the universal ribosomal protein uL3 family. In terms of assembly, part of the 50S ribosomal subunit. Forms a cluster with proteins L14 and L19.

Its function is as follows. One of the primary rRNA binding proteins, it binds directly near the 3'-end of the 23S rRNA, where it nucleates assembly of the 50S subunit. This chain is Large ribosomal subunit protein uL3, found in Azobacteroides pseudotrichonymphae genomovar. CFP2.